Reading from the N-terminus, the 309-residue chain is Elongation factor Ts (309 aa).

Residues Thr-98–Val-101 are involved in Mg(2+) ion dislocation from EF-Tu.

Belongs to the EF-Ts family.

It localises to the cytoplasm. Associates with the EF-Tu.GDP complex and induces the exchange of GDP to GTP. It remains bound to the aminoacyl-tRNA.EF-Tu.GTP complex up to the GTP hydrolysis stage on the ribosome. This is Elongation factor Ts from Orientia tsutsugamushi (strain Boryong) (Rickettsia tsutsugamushi).